The chain runs to 185 residues: Ribosome-recycling factor (185 aa).

This sequence belongs to the RRF family.

It is found in the cytoplasm. In terms of biological role, responsible for the release of ribosomes from messenger RNA at the termination of protein biosynthesis. May increase the efficiency of translation by recycling ribosomes from one round of translation to another. The protein is Ribosome-recycling factor of Xanthomonas campestris pv. campestris (strain 8004).